Reading from the N-terminus, the 691-residue chain is MGIRCSTWLRWPLSPQLLLLLLLCPTGSRAQDEDGDYEELMLALPSQEDSLVDEASHVATATFRRCSKEAWRLPGTYVVVLMEETQRLQVEQTAHRLQTWAARRGYVIKVLHVFYDLFPGFLVKMSSDLLGLALKLPHVEYIEEDSLVFAQSIPWNLERIIPAWQQTEEDSSPDGSSQVEVYLLDTSIQSGHREIEGRVTITDFNSVPEEDGTRFHRQASKCDSHGTHLAGVVSGRDAGVAKGTSLHSLRVLNCQGKGTVSGTLIGLEFIRKSQLIQPSGPLVVLLPLAGGYSRILNTACQRLARTGVVLVAAAGNFRDDACLYSPASAPEVITVGATNAQDQPVTLGTLGTNFGRCVDLFAPGKDIIGASSDCSTCYMSQSGTSQAAAHVAGIVAMMLNRDPALTLAELRQRLILFSTKDVINMAWFPEDQRVLTPNRVATLPPSTQETGGQLLCRTVWSAHSGPTRTATATARCAPEEELLSCSSFSRSGRRRGDRIEAIGGQQVCKALNAFGGEGVYAVARCCLLPRVNCSIHNTPAARAGPQTPVHCHQKDHVLTGCSFHWEVENLRAQQQPLLRSRHQPGQCVGHQEASVHASCCHAPGLECKIKEHGIAGPAEQVTVACEAGWTLTGCNVLPGASLPLGAYSVDNVCVARIRDAGRADRTSEEATVAAAICCRSRPSAKASWVHQ.

The N-terminal stretch at 1-30 (MGIRCSTWLRWPLSPQLLLLLLLCPTGSRA) is a signal peptide. The propeptide occupies 31–151 (QDEDGDYEEL…IEEDSLVFAQ (121 aa)). Sulfotyrosine is present on Y37. Phosphoserine is present on S46. In terms of domain architecture, Peptidase S8 spans 154–441 (PWNLERIIPA…QRVLTPNRVA (288 aa)). Active-site charge relay system residues include D185 and H225. Disulfide bonds link C222/C254 and C322/C357. S385 functions as the Charge relay system in the catalytic mechanism. Residues 449–691 (ETGGQLLCRT…PSAKASWVHQ (243 aa)) form a C-terminal domain region. Intrachain disulfides connect C456–C526, C476–C525, and C485–C508. Residues 495-497 (RGD) carry the Cell attachment site motif. N532 is a glycosylation site (N-linked (GlcNAc...) asparagine). Cystine bridges form between C533–C600, C551–C599, C561–C587, C607–C678, C625–C677, and C634–C653. Residue S687 is modified to Phosphoserine.

Belongs to the peptidase S8 family. In terms of assembly, monomer. Can self-associate to form dimers and higher multimers which may have increased LDLR degrading activity. The precursor protein but not the mature protein may form multimers. Interacts with APOB, VLDLR, LRP8/APOER2 and BACE1. The full-length immature form (pro-PCSK9) interacts with SCNN1A, SCNN1B and SCNN1G. The pro-PCSK9 form (via C-terminal domain) interacts with LDLR. Interacts (via the C-terminal domain) with ANXA2 (via repeat Annexin 1); the interaction inhibits the degradation of LDLR. Requires Ca(2+) as cofactor. Cleavage by furin and PCSK5 generates a truncated inactive protein that is unable to induce LDLR degradation. Post-translationally, undergoes autocatalytic cleavage in the endoplasmic reticulum to release the propeptide from the N-terminus and the cleavage of the propeptide is strictly required for its maturation and activation. The cleaved propeptide however remains associated with the catalytic domain through non-covalent interactions, preventing potential substrates from accessing its active site. As a result, it is secreted from cells as a propeptide-containing, enzymatically inactive protein. In terms of processing, phosphorylation protects the propeptide against proteolysis. As to expression, highly expressed in 12-day embryo. In the adult, strongly expressed in liver, small intestine, jejunum, and to a lesser extent in kidney, lung, spleen and thymus. Expression in the liver is up-regulated following partial hepatectomy.

It localises to the cytoplasm. The protein resides in the secreted. The protein localises to the endosome. Its subcellular location is the lysosome. It is found in the cell surface. It localises to the endoplasmic reticulum. The protein resides in the golgi apparatus. Its proteolytic activity is autoinhibited by the non-covalent binding of the propeptide to the catalytic domain. Inhibited by EGTA. Functionally, crucial player in the regulation of plasma cholesterol homeostasis. Binds to low-density lipid receptor family members: low density lipoprotein receptor (LDLR), very low density lipoprotein receptor (VLDLR), apolipoprotein E receptor (LRP1/APOER) and apolipoprotein receptor 2 (LRP8/APOER2), and promotes their degradation in intracellular acidic compartments. Acts via a non-proteolytic mechanism to enhance the degradation of the hepatic LDLR through a clathrin LDLRAP1/ARH-mediated pathway. May prevent the recycling of LDLR from endosomes to the cell surface or direct it to lysosomes for degradation. Can induce ubiquitination of LDLR leading to its subsequent degradation. Inhibits intracellular degradation of APOB via the autophagosome/lysosome pathway in a LDLR-independent manner. Involved in the disposal of non-acetylated intermediates of BACE1 in the early secretory pathway. Inhibits epithelial Na(+) channel (ENaC)-mediated Na(+) absorption by reducing ENaC surface expression primarily by increasing its proteasomal degradation. Regulates neuronal apoptosis via modulation of LRP8/APOER2 levels and related anti-apoptotic signaling pathways. This Rattus norvegicus (Rat) protein is Proprotein convertase subtilisin/kexin type 9 (Pcsk9).